Consider the following 225-residue polypeptide: Pre-mRNA-splicing factor SPF27 (225 aa).

Residue alanine 2 is modified to N-acetylalanine. A Phosphoserine modification is found at serine 94. Residues 138–222 are a coiled coil; the sequence is YNENLVHMIE…HGEANKENIR (85 aa).

This sequence belongs to the SPF27 family. In terms of assembly, component of the pre-catalytic and catalytic spliceosome complexes. Component of the postcatalytic spliceosome P complex. Component of the PRP19-CDC5L splicing complex composed of a core complex comprising a homotetramer of PRPF19, CDC5L, PLRG1 and BCAS2, and at least three less stably associated proteins CTNNBL1, CWC15 and HSPA8. Interacts directly in the complex with PRPF19, CDC5L and PLRG1. In terms of tissue distribution, ubiquitously expressed.

Its subcellular location is the nucleus. It localises to the nucleolus. Its function is as follows. Required for pre-mRNA splicing as component of the activated spliceosome. Component of the PRP19-CDC5L complex that forms an integral part of the spliceosome and is required for activating pre-mRNA splicing. May have a scaffolding role in the spliceosome assembly as it contacts all other components of the core complex. The PRP19-CDC5L complex may also play a role in the response to DNA damage (DDR). In Homo sapiens (Human), this protein is Pre-mRNA-splicing factor SPF27 (BCAS2).